Here is a 551-residue protein sequence, read N- to C-terminus: CTP synthase (551 aa).

Residues 1–267 form an amidoligase domain region; the sequence is MSGTKYIFVT…DALVLEKLGL (267 aa). A CTP-binding site is contributed by Ser15. Ser15 is a UTP binding site. ATP is bound at residue 16–21; it reads SIGKGT. Tyr56 provides a ligand contact to L-glutamine. Asp73 provides a ligand contact to ATP. Residues Asp73 and Glu141 each contribute to the Mg(2+) site. CTP contacts are provided by residues 148–150, 188–193, and Lys224; these read DIE and KTKPTQ. UTP-binding positions include 188–193 and Lys224; that span reads KTKPTQ. The region spanning 292 to 534 is the Glutamine amidotransferase type-1 domain; it reads RVAVIGKYIR…VGACLGAAEE (243 aa). Gly355 is an L-glutamine binding site. Cys382 acts as the Nucleophile; for glutamine hydrolysis in catalysis. L-glutamine is bound by residues 383 to 386, Glu406, and Arg462; that span reads LGMQ. Catalysis depends on residues His507 and Glu509.

This sequence belongs to the CTP synthase family. Homotetramer.

It carries out the reaction UTP + L-glutamine + ATP + H2O = CTP + L-glutamate + ADP + phosphate + 2 H(+). The enzyme catalyses L-glutamine + H2O = L-glutamate + NH4(+). It catalyses the reaction UTP + NH4(+) + ATP = CTP + ADP + phosphate + 2 H(+). It functions in the pathway pyrimidine metabolism; CTP biosynthesis via de novo pathway; CTP from UDP: step 2/2. With respect to regulation, allosterically activated by GTP, when glutamine is the substrate; GTP has no effect on the reaction when ammonia is the substrate. The allosteric effector GTP functions by stabilizing the protein conformation that binds the tetrahedral intermediate(s) formed during glutamine hydrolysis. Inhibited by the product CTP, via allosteric rather than competitive inhibition. Functionally, catalyzes the ATP-dependent amination of UTP to CTP with either L-glutamine or ammonia as the source of nitrogen. Regulates intracellular CTP levels through interactions with the four ribonucleotide triphosphates. The protein is CTP synthase of Rubrobacter xylanophilus (strain DSM 9941 / JCM 11954 / NBRC 16129 / PRD-1).